Consider the following 259-residue polypeptide: 3-hydroxypropionyl-coenzyme A dehydratase (259 aa).

The Nucleophile role is filled by Glu-113. Glu-133 (proton acceptor) is an active-site residue.

This sequence belongs to the enoyl-CoA hydratase/isomerase family. As to quaternary structure, monomer.

The enzyme catalyses 3-hydroxypropanoyl-CoA = acryloyl-CoA + H2O. Its function is as follows. Plays a role in autotrophic carbon fixation via the 3-hydroxypropionate/4-hydroxybutyrate cycle. Catalyzes the reversible dehydration of 3-hydroxypropionyl-CoA to form acryloyl-CoA, and the reversible dehydration of (S)-3-hydroxybutyryl-CoA to form crotonyl-CoA. Inactive towards (R)-3-hydroxybutyryl-CoA. This is 3-hydroxypropionyl-coenzyme A dehydratase from Metallosphaera sedula (strain ATCC 51363 / DSM 5348 / JCM 9185 / NBRC 15509 / TH2).